The sequence spans 786 residues: Endonuclease MutS2 (786 aa).

333 to 340 is a binding site for ATP; that stretch reads GPNTGGKT. The Smr domain maps to 711–786; that stretch reads LDLRGERYDQ…GSGATIVNFK (76 aa).

It belongs to the DNA mismatch repair MutS family. MutS2 subfamily. As to quaternary structure, homodimer. Binds to stalled ribosomes, contacting rRNA.

Functionally, endonuclease that is involved in the suppression of homologous recombination and thus may have a key role in the control of bacterial genetic diversity. Its function is as follows. Acts as a ribosome collision sensor, splitting the ribosome into its 2 subunits. Detects stalled/collided 70S ribosomes which it binds and splits by an ATP-hydrolysis driven conformational change. Acts upstream of the ribosome quality control system (RQC), a ribosome-associated complex that mediates the extraction of incompletely synthesized nascent chains from stalled ribosomes and their subsequent degradation. Probably generates substrates for RQC. The chain is Endonuclease MutS2 from Lacticaseibacillus paracasei (strain ATCC 334 / BCRC 17002 / CCUG 31169 / CIP 107868 / KCTC 3260 / NRRL B-441) (Lactobacillus paracasei).